The primary structure comprises 135 residues: Peptidyl-prolyl cis-trans isomerase FPR2 (135 aa).

A signal peptide spans 1 to 17; it reads MMFNIYLFVTFFSTILA. The PPIase FKBP-type domain occupies 43-132; that stretch reads GDKVKVHYTG…VFDVELVDVK (90 aa).

It belongs to the FKBP-type PPIase family. FKBP2 subfamily.

It localises to the endoplasmic reticulum membrane. It carries out the reaction [protein]-peptidylproline (omega=180) = [protein]-peptidylproline (omega=0). Inhibited by both FK506 and rapamycin. Binds FK506 with 15-fold lower affinity than FKB1. PPIases accelerate the folding of proteins. It catalyzes the cis-trans isomerization of proline imidic peptide bonds in oligopeptides. FKBP-13 may play a role in protein trafficking in the ER. This is Peptidyl-prolyl cis-trans isomerase FPR2 (FPR2) from Saccharomyces cerevisiae (strain ATCC 204508 / S288c) (Baker's yeast).